Consider the following 258-residue polypeptide: NAD kinase (258 aa).

Aspartate 51 acts as the Proton acceptor in catalysis. NAD(+) is bound by residues 51-52, lysine 56, 119-120, lysine 130, aspartate 149, 160-165, and alanine 184; these read DG, ND, and TAYSLS.

The protein belongs to the NAD kinase family. A divalent metal cation is required as a cofactor.

The protein resides in the cytoplasm. The catalysed reaction is NAD(+) + ATP = ADP + NADP(+) + H(+). Involved in the regulation of the intracellular balance of NAD and NADP, and is a key enzyme in the biosynthesis of NADP. Catalyzes specifically the phosphorylation on 2'-hydroxyl of the adenosine moiety of NAD to yield NADP. This Thermotoga sp. (strain RQ2) protein is NAD kinase.